The following is a 546-amino-acid chain: Tegument protein UL21 homolog (546 aa).

The protein belongs to the alphaherpesvirinae HHV-1 UL21 protein family.

The protein resides in the virion tegument. It is found in the host cytoplasm. It localises to the host nucleus. In terms of biological role, may facilitate the viral transport through neural circuits. This is Tegument protein UL21 homolog (MDV033) from Gallus gallus (Chicken).